Consider the following 414-residue polypeptide: Secreted beta-glucosidase sun1 (414 aa).

The first 19 residues, 1–19 (MKFNTVALTLATAGSLVTA), serve as a signal peptide directing secretion. N-linked (GlcNAc...) asparagine glycosylation occurs at asparagine 80. Positions 115 to 140 (TSASSSETVQTPAASSSSASSSSTAT) are enriched in low complexity. Residues 115-141 (TSASSSETVQTPAASSSSASSSSTATG) are disordered. The N-linked (GlcNAc...) asparagine glycan is linked to asparagine 377.

The protein belongs to the SUN family. In terms of processing, highly glycosylated.

It is found in the secreted. The protein localises to the cell wall. Its function is as follows. Cell surface beta-glucosidase involved in cell wall biosynthesis and septation, and thus required for normal growth and correct hyphal morphogenesis. Has hydrolytic activity on linear (1-&gt;3)-beta-D-glucans such as laminaribiose and other laminarioligosaccharides. Also has a minor transferase activity. The chain is Secreted beta-glucosidase sun1 (sun1) from Aspergillus fumigatus (strain ATCC MYA-4609 / CBS 101355 / FGSC A1100 / Af293) (Neosartorya fumigata).